Reading from the N-terminus, the 143-residue chain is Large ribosomal subunit protein uL11 (143 aa).

Belongs to the universal ribosomal protein uL11 family. In terms of assembly, part of the ribosomal stalk of the 50S ribosomal subunit. Interacts with L10 and the large rRNA to form the base of the stalk. L10 forms an elongated spine to which L12 dimers bind in a sequential fashion forming a multimeric L10(L12)X complex. In terms of processing, one or more lysine residues are methylated.

Functionally, forms part of the ribosomal stalk which helps the ribosome interact with GTP-bound translation factors. The polypeptide is Large ribosomal subunit protein uL11 (Sphingopyxis alaskensis (strain DSM 13593 / LMG 18877 / RB2256) (Sphingomonas alaskensis)).